Reading from the N-terminus, the 165-residue chain is Cyclic pyranopterin monophosphate synthase (165 aa).

Substrate contacts are provided by residues 76–78 (LCH) and 119–120 (ME). Asp-134 is a catalytic residue.

Belongs to the MoaC family. As to quaternary structure, homohexamer; trimer of dimers.

The catalysed reaction is (8S)-3',8-cyclo-7,8-dihydroguanosine 5'-triphosphate = cyclic pyranopterin phosphate + diphosphate. Its pathway is cofactor biosynthesis; molybdopterin biosynthesis. Functionally, catalyzes the conversion of (8S)-3',8-cyclo-7,8-dihydroguanosine 5'-triphosphate to cyclic pyranopterin monophosphate (cPMP). The chain is Cyclic pyranopterin monophosphate synthase from Photobacterium profundum (strain SS9).